The chain runs to 174 residues: MTTIVSVRRNNQVVIAGDGQVSLGNTVMKGNAKKVRRLYHNKVLAGFAGGTADAFTLFERFEAKLEMHQGHLLRSAVELAKDWRTDRMLRKLEALLVVADAETSLIITGNGDVVQPEHDLVAIGSGGNYAQAAALALLQNTELSALEIAEKSLTIAADICVFTNQFKTIEELNY.

Threonine 2 is a catalytic residue. Residues alanine 157, cysteine 160, and threonine 163 each coordinate Na(+).

It belongs to the peptidase T1B family. HslV subfamily. In terms of assembly, a double ring-shaped homohexamer of HslV is capped on each side by a ring-shaped HslU homohexamer. The assembly of the HslU/HslV complex is dependent on binding of ATP.

It localises to the cytoplasm. It carries out the reaction ATP-dependent cleavage of peptide bonds with broad specificity.. Allosterically activated by HslU binding. In terms of biological role, protease subunit of a proteasome-like degradation complex believed to be a general protein degrading machinery. The polypeptide is ATP-dependent protease subunit HslV (Shewanella baltica (strain OS195)).